The primary structure comprises 145 residues: Neutral phospholipase A2 paradoxin-like beta chain (145 aa).

Positions 1–27 (MHPAHLLVLLAVCVSLLGASDIPPLPL) are cleaved as a signal peptide. 7 cysteine pairs are disulfide-bonded: Cys38/Cys98, Cys54/Cys144, Cys56/Cys72, Cys71/Cys125, Cys78/Cys118, Cys87/Cys111, and Cys105/Cys116.

It belongs to the phospholipase A2 family. Group I subfamily. N49 sub-subfamily. In terms of assembly, heterotrimer of alpha, beta, and gamma chains; non-covalently linked. In terms of tissue distribution, expressed by the venom gland.

It localises to the secreted. In terms of biological role, heterotrimer: Snake venom phospholipase A2 (PLA2) heterotrimer that acts as a potent presynaptic neurotoxin by blocking synaptic transmission and synaptic vesicle recycling. May act by binding in a calcium-dependent fashion to neurotonal pentraxin-1 (NPTX1) and neurotonal pentraxin-2 (NPTX2), but not to neuronal pentraxin receptor (NPTXR). Also binds to taipoxin-associated calcium binding protein 49 (RCN2), a protein localized in the lumen of endoplasmic reticulum. Monomer (beta chain): Snake venom phospholipase A2 homolog that is neither toxic nor enzymatically active. Does not bind calcium. This chain is Neutral phospholipase A2 paradoxin-like beta chain, found in Oxyuranus microlepidotus (Inland taipan).